We begin with the raw amino-acid sequence, 310 residues long: MKTLIRKFSRTAITVVLVILAFIAIFNAWVYYTESPWTRDARFSADVVAIAPDVSGLITQVNVHDNQLVKKGQILFTIDQPRYQKALEEAQADVAYYQVLAQEKRQEAGRRNRLGVQAMSREEIDQANNVLQTVLHQLAKAQATRDLAKLDLERTVIRAPADGWVTNLNVYTGEFITRGSTAVALVKQNSFYVLAYMEETKLEGVRPGYRAEITPLGSNKVLKGTVDSVAAGVTNASSTRDDKGMATIDSDLEWVRLAQRVPVRIRLDNQQENIWPAGTTATVVVTGKQDRDESQDSFFRKMAHRLREFG.

The helical transmembrane segment at 12–32 (AITVVLVILAFIAIFNAWVYY) threads the bilayer.

This sequence belongs to the membrane fusion protein (MFP) (TC 8.A.1) family.

The protein localises to the cell inner membrane. Functionally, forms an efflux pump with AaeB. This is p-hydroxybenzoic acid efflux pump subunit AaeA from Shigella flexneri.